We begin with the raw amino-acid sequence, 240 residues long: CRISPR-associated protein Cas5 3 (240 aa).

The protein belongs to the CRISPR-associated protein Cas5 family. Subtype I-A/Apern subfamily. As to quaternary structure, part of the aCascade ribonucleoprotein complex.

In terms of biological role, CRISPR (clustered regularly interspaced short palindromic repeat) is an adaptive immune system that provides protection against mobile genetic elements (viruses, transposable elements and conjugative plasmids). CRISPR clusters contain spacers, sequences complementary to antecedent mobile elements, and target invading nucleic acids. CRISPR clusters are transcribed and processed into CRISPR RNA (crRNA). This chain is CRISPR-associated protein Cas5 3 (cas5c), found in Saccharolobus solfataricus (strain ATCC 35092 / DSM 1617 / JCM 11322 / P2) (Sulfolobus solfataricus).